A 588-amino-acid chain; its full sequence is Phomenoic acid biosynthesis cluster cytochrome P450 monooxygenase (588 aa).

An N-terminal signal peptide occupies residues 1–21; sequence MSFARIFITILLLFILRRAFK. A glycan (N-linked (GlcNAc...) asparagine) is linked at Asn293. A compositionally biased stretch (basic and acidic residues) spans 467–486; it reads HQSDPDRFKPSPDAPDEKLF. A disordered region spans residues 467–490; the sequence is HQSDPDRFKPSPDAPDEKLFRPSR. Cys519 contacts heme.

The protein belongs to the cytochrome P450 family. It depends on heme as a cofactor.

It functions in the pathway secondary metabolite biosynthesis. Its function is as follows. Cytochrome P450 monooxygenase; part of the gene cluster that mediates the biosynthesis of phomenoic acid, a long chain aliphatic carboxylic acid that does not appear to be essential for pathogenicity but may play a role in allowing to outcompete other fungi in the environmental niche via its antifungal properties. The polyketide synthase produces the long methylated aliphatic carboxylic acid chain of phomenoic acid. The cluster-specific cytochrome P450 monooxygenase may then hydroxylate the methyl group of carbon 31. The putative dehydrogenase YogA, which has no obvious role in phomenoic acid biosynthesis, may further modify phomenoic acid to produce a compound not identified yet. The chain is Phomenoic acid biosynthesis cluster cytochrome P450 monooxygenase from Leptosphaeria maculans (strain JN3 / isolate v23.1.3 / race Av1-4-5-6-7-8) (Blackleg fungus).